The following is a 195-amino-acid chain: Imidazoleglycerol-phosphate dehydratase (195 aa).

The protein belongs to the imidazoleglycerol-phosphate dehydratase family.

The protein resides in the cytoplasm. The catalysed reaction is D-erythro-1-(imidazol-4-yl)glycerol 3-phosphate = 3-(imidazol-4-yl)-2-oxopropyl phosphate + H2O. Its pathway is amino-acid biosynthesis; L-histidine biosynthesis; L-histidine from 5-phospho-alpha-D-ribose 1-diphosphate: step 6/9. The protein is Imidazoleglycerol-phosphate dehydratase of Methylorubrum extorquens (strain CM4 / NCIMB 13688) (Methylobacterium extorquens).